Consider the following 692-residue polypeptide: ABC transporter F family member 5 (692 aa).

The disordered stretch occupies residues 64-95; that stretch reads EIESLFSKQPSQQDSDRKRNGKSSKNGASGIS. The span at 86–95 shows a compositional bias: polar residues; sequence SSKNGASGIS. ABC transporter domains follow at residues 98 to 356 and 425 to 640; these read VKLE…ETQN and VNVK…TKEL. ATP is bound by residues 130 to 137 and 457 to 464; these read GVNGAGKT and GPNGCGKS. The interval 644 to 692 is disordered; it reads AELEEKAPKVKAKSKMSKAEKEARKKQKMQAFQQAKQKSKASKNSKRWN. Residues 680–692 are compositionally biased toward basic residues; that stretch reads QKSKASKNSKRWN.

It belongs to the ABC transporter superfamily. ABCF family. EF3 (TC 3.A.1.121) subfamily.

This Arabidopsis thaliana (Mouse-ear cress) protein is ABC transporter F family member 5 (ABCF5).